Reading from the N-terminus, the 361-residue chain is Chorismate synthase (361 aa).

Arginine 48 and arginine 54 together coordinate NADP(+). Residues 125–127, 238–239, glycine 278, 293–297, and arginine 319 contribute to the FMN site; these read RSS, NA, and KPTSS.

It belongs to the chorismate synthase family. As to quaternary structure, homotetramer. The cofactor is FMNH2.

The enzyme catalyses 5-O-(1-carboxyvinyl)-3-phosphoshikimate = chorismate + phosphate. It functions in the pathway metabolic intermediate biosynthesis; chorismate biosynthesis; chorismate from D-erythrose 4-phosphate and phosphoenolpyruvate: step 7/7. Its function is as follows. Catalyzes the anti-1,4-elimination of the C-3 phosphate and the C-6 proR hydrogen from 5-enolpyruvylshikimate-3-phosphate (EPSP) to yield chorismate, which is the branch point compound that serves as the starting substrate for the three terminal pathways of aromatic amino acid biosynthesis. This reaction introduces a second double bond into the aromatic ring system. The sequence is that of Chorismate synthase from Salmonella dublin (strain CT_02021853).